We begin with the raw amino-acid sequence, 190 residues long: Xanthine phosphoribosyltransferase (190 aa).

Leucine 20 and asparagine 27 together coordinate xanthine. Position 128 to 132 (128 to 132) interacts with 5-phospho-alpha-D-ribose 1-diphosphate; the sequence is ANGHA. Lysine 156 is a xanthine binding site.

Belongs to the purine/pyrimidine phosphoribosyltransferase family. Xpt subfamily. Homodimer.

Its subcellular location is the cytoplasm. The catalysed reaction is XMP + diphosphate = xanthine + 5-phospho-alpha-D-ribose 1-diphosphate. The protein operates within purine metabolism; XMP biosynthesis via salvage pathway; XMP from xanthine: step 1/1. Functionally, converts the preformed base xanthine, a product of nucleic acid breakdown, to xanthosine 5'-monophosphate (XMP), so it can be reused for RNA or DNA synthesis. This Pseudomonas aeruginosa (strain ATCC 15692 / DSM 22644 / CIP 104116 / JCM 14847 / LMG 12228 / 1C / PRS 101 / PAO1) protein is Xanthine phosphoribosyltransferase.